Consider the following 215-residue polypeptide: RxLR effector protein PITG_00582 (215 aa).

A signal peptide spans 1-19; it reads MLPYKTLLLALGFFFTVQC. Positions 39 to 51 match the RxLR-dEER motif; it reads RLLRSPEKTDEER. Positions 81–149 form a coiled coil; it reads VAKQAKEMSN…QNELEKLAKQ (69 aa).

The protein belongs to the RxLR effector family.

Its subcellular location is the secreted. The protein localises to the host cell membrane. Functionally, effector that might be involved in host plant infection. The chain is RxLR effector protein PITG_00582 from Phytophthora infestans (strain T30-4) (Potato late blight agent).